Here is a 341-residue protein sequence, read N- to C-terminus: Phosphate acyltransferase (341 aa).

It belongs to the PlsX family. Homodimer. Probably interacts with PlsY.

The protein resides in the cytoplasm. It catalyses the reaction a fatty acyl-[ACP] + phosphate = an acyl phosphate + holo-[ACP]. The protein operates within lipid metabolism; phospholipid metabolism. Functionally, catalyzes the reversible formation of acyl-phosphate (acyl-PO(4)) from acyl-[acyl-carrier-protein] (acyl-ACP). This enzyme utilizes acyl-ACP as fatty acyl donor, but not acyl-CoA. The protein is Phosphate acyltransferase of Saccharophagus degradans (strain 2-40 / ATCC 43961 / DSM 17024).